Here is a 307-residue protein sequence, read N- to C-terminus: Putative oxidoreductase YceM (307 aa).

The protein belongs to the Gfo/Idh/MocA family.

The chain is Putative oxidoreductase YceM (yceM) from Escherichia coli (strain K12).